The sequence spans 258 residues: Type III pantothenate kinase (258 aa).

6–13 lines the ATP pocket; it reads DVGNTNIV. Substrate contacts are provided by residues tyrosine 100 and 107–110; that span reads GADR. Aspartate 109 acts as the Proton acceptor in catalysis. Aspartate 129 provides a ligand contact to K(+). Threonine 132 serves as a coordination point for ATP. Threonine 184 is a substrate binding site.

The protein belongs to the type III pantothenate kinase family. In terms of assembly, homodimer. Requires NH4(+) as cofactor. The cofactor is K(+).

Its subcellular location is the cytoplasm. It catalyses the reaction (R)-pantothenate + ATP = (R)-4'-phosphopantothenate + ADP + H(+). The protein operates within cofactor biosynthesis; coenzyme A biosynthesis; CoA from (R)-pantothenate: step 1/5. Catalyzes the phosphorylation of pantothenate (Pan), the first step in CoA biosynthesis. This is Type III pantothenate kinase from Desulfitobacterium hafniense (strain DSM 10664 / DCB-2).